A 312-amino-acid polypeptide reads, in one-letter code: DNA-directed RNA polymerase subunit alpha (312 aa).

An alpha N-terminal domain (alpha-NTD) region spans residues 1-229 (MLQYQIERID…ELFQPLATVT (229 aa)). Positions 240–312 (PSPEAQIPLE…ISIPQSRTSV (73 aa)) are alpha C-terminal domain (alpha-CTD).

It belongs to the RNA polymerase alpha chain family. In cyanobacteria the RNAP catalytic core is composed of 2 alpha, 1 beta, 1 beta', 1 gamma and 1 omega subunit. When a sigma factor is associated with the core the holoenzyme is formed, which can initiate transcription.

The catalysed reaction is RNA(n) + a ribonucleoside 5'-triphosphate = RNA(n+1) + diphosphate. Its function is as follows. DNA-dependent RNA polymerase catalyzes the transcription of DNA into RNA using the four ribonucleoside triphosphates as substrates. The polypeptide is DNA-directed RNA polymerase subunit alpha (Prochlorococcus marinus (strain MIT 9301)).